Consider the following 34-residue polypeptide: Photosystem II reaction center protein M (34 aa).

The helical transmembrane segment at 5–25 threads the bilayer; that stretch reads ILAFIATALFILVPTSFLLII.

It belongs to the PsbM family. As to quaternary structure, PSII is composed of 1 copy each of membrane proteins PsbA, PsbB, PsbC, PsbD, PsbE, PsbF, PsbH, PsbI, PsbJ, PsbK, PsbL, PsbM, PsbT, PsbX, PsbY, PsbZ, Psb30/Ycf12, at least 3 peripheral proteins of the oxygen-evolving complex and a large number of cofactors. It forms dimeric complexes.

The protein resides in the plastid. It localises to the chloroplast thylakoid membrane. One of the components of the core complex of photosystem II (PSII). PSII is a light-driven water:plastoquinone oxidoreductase that uses light energy to abstract electrons from H(2)O, generating O(2) and a proton gradient subsequently used for ATP formation. It consists of a core antenna complex that captures photons, and an electron transfer chain that converts photonic excitation into a charge separation. This subunit is found at the monomer-monomer interface. The sequence is that of Photosystem II reaction center protein M from Triticum aestivum (Wheat).